The chain runs to 260 residues: Indole-3-glycerol phosphate synthase (260 aa).

It belongs to the TrpC family.

The catalysed reaction is 1-(2-carboxyphenylamino)-1-deoxy-D-ribulose 5-phosphate + H(+) = (1S,2R)-1-C-(indol-3-yl)glycerol 3-phosphate + CO2 + H2O. It functions in the pathway amino-acid biosynthesis; L-tryptophan biosynthesis; L-tryptophan from chorismate: step 4/5. This is Indole-3-glycerol phosphate synthase from Neisseria meningitidis serogroup B (strain ATCC BAA-335 / MC58).